Reading from the N-terminus, the 449-residue chain is Na(+)/H(+) antiporter NhaA 2 (449 aa).

11 helical membrane passes run 32–52 (IEATSGAVLLLATVVALTLSN), 87–107 (GLMTLFFFIVALEIKREVVLG), 114–134 (MVALSVVAAAGGMLVPMGLYL), 145–165 (GWGVVMPTDTAFVIGCLALLG), 174–194 (VFLLSLAVVDDLAAILVVAVG), 202–222 (TALALGAVGLVIIRGMALLGV), 233–253 (AIIWLAVNASGIHATIVGVIL), 318–338 (WVAFGVMPLFALANAGVPITI), 347–367 (LAVMAGFVLGKPIGVTAFAWL), 382–402 (WGGLVGGALLTGIGFTMALFI), and 417–437 (LGILAASVVSSVAGLTLLCAL).

The protein belongs to the NhaA Na(+)/H(+) (TC 2.A.33) antiporter family.

Its subcellular location is the cell inner membrane. The enzyme catalyses Na(+)(in) + 2 H(+)(out) = Na(+)(out) + 2 H(+)(in). Na(+)/H(+) antiporter that extrudes sodium in exchange for external protons. The polypeptide is Na(+)/H(+) antiporter NhaA 2 (Acidiphilium cryptum (strain JF-5)).